Reading from the N-terminus, the 233-residue chain is MGQKVHPNGIRLGIVKPWNSTWYANTKEFADNLDSDFKVRKYLTKELEKASVSRIVIERPAKSIRVTIHTARPGIVIGKKGEDVEKLRKVVADIAGVPAQINIAEVRKPELDAKLVADSITSQLERRVMFRRAMKRAVQNAMRLGAKGIKVEVSGRLGGAEIARTEWYREGRVPLHTLRADIDYNTSEAHTTYGVIGVKVWIFKGEILGGMAAVEQPEKPAAQPKKQQRKGRK.

Residues 39 to 107 (VRKYLTKELE…PAQINIAEVR (69 aa)) form the KH type-2 domain.

It belongs to the universal ribosomal protein uS3 family. Part of the 30S ribosomal subunit. Forms a tight complex with proteins S10 and S14.

Its function is as follows. Binds the lower part of the 30S subunit head. Binds mRNA in the 70S ribosome, positioning it for translation. This is Small ribosomal subunit protein uS3 from Pectobacterium carotovorum subsp. carotovorum (strain PC1).